A 140-amino-acid chain; its full sequence is Large ribosomal subunit protein uL11 (140 aa).

The protein belongs to the universal ribosomal protein uL11 family. As to quaternary structure, part of the ribosomal stalk of the 50S ribosomal subunit. Interacts with L10 and the large rRNA to form the base of the stalk. L10 forms an elongated spine to which L12 dimers bind in a sequential fashion forming a multimeric L10(L12)X complex. In terms of processing, one or more lysine residues are methylated.

Forms part of the ribosomal stalk which helps the ribosome interact with GTP-bound translation factors. In Geotalea daltonii (strain DSM 22248 / JCM 15807 / FRC-32) (Geobacter daltonii), this protein is Large ribosomal subunit protein uL11.